An 879-amino-acid polypeptide reads, in one-letter code: Alanine--tRNA ligase (879 aa).

Zn(2+) contacts are provided by histidine 566, histidine 570, cysteine 668, and histidine 672.

This sequence belongs to the class-II aminoacyl-tRNA synthetase family. Zn(2+) serves as cofactor.

The protein localises to the cytoplasm. It catalyses the reaction tRNA(Ala) + L-alanine + ATP = L-alanyl-tRNA(Ala) + AMP + diphosphate. In terms of biological role, catalyzes the attachment of alanine to tRNA(Ala) in a two-step reaction: alanine is first activated by ATP to form Ala-AMP and then transferred to the acceptor end of tRNA(Ala). Also edits incorrectly charged Ser-tRNA(Ala) and Gly-tRNA(Ala) via its editing domain. This is Alanine--tRNA ligase from Halalkalibacterium halodurans (strain ATCC BAA-125 / DSM 18197 / FERM 7344 / JCM 9153 / C-125) (Bacillus halodurans).